A 27-amino-acid chain; its full sequence is 23S rRNA methylase leader peptide (27 aa).

Its function is as follows. This peptide is involved in the control mechanism of the synthesis of the erythromycin resistance protein. This Enterococcus faecalis (Streptococcus faecalis) protein is 23S rRNA methylase leader peptide (ermC).